The chain runs to 491 residues: Galactose-1-phosphate uridylyltransferase (491 aa).

This sequence belongs to the galactose-1-phosphate uridylyltransferase type 2 family.

The protein resides in the cytoplasm. The enzyme catalyses alpha-D-galactose 1-phosphate + UDP-alpha-D-glucose = alpha-D-glucose 1-phosphate + UDP-alpha-D-galactose. Its pathway is carbohydrate metabolism; galactose metabolism. The protein is Galactose-1-phosphate uridylyltransferase (galT) of Streptococcus mutans serotype c (strain ATCC 700610 / UA159).